Reading from the N-terminus, the 148-residue chain is Glyoxalase domain-containing protein 5 (148 aa).

The VOC domain occupies 25-145 (RLDHIVMTVK…DRNLLEVSSY (121 aa)).

It belongs to the glyoxalase I family.

The polypeptide is Glyoxalase domain-containing protein 5 (Glod5) (Mus musculus (Mouse)).